A 235-amino-acid chain; its full sequence is tRNA pseudouridine synthase B (235 aa).

Residue Asp45 is the Nucleophile of the active site.

This sequence belongs to the pseudouridine synthase TruB family. Type 1 subfamily.

The catalysed reaction is uridine(55) in tRNA = pseudouridine(55) in tRNA. Functionally, responsible for synthesis of pseudouridine from uracil-55 in the psi GC loop of transfer RNAs. The chain is tRNA pseudouridine synthase B from Chlamydia pneumoniae (Chlamydophila pneumoniae).